Consider the following 440-residue polypeptide: Golgi-associated RAB2 interactor protein 2 (440 aa).

This sequence belongs to the GARIN family. In terms of assembly, interacts with CALM1. Expressed in testis (at protein level).

It is found in the cell projection. Its subcellular location is the cilium. The protein resides in the flagellum. Functionally, seems to play a role in sperm motility. The chain is Golgi-associated RAB2 interactor protein 2 from Mus musculus (Mouse).